The chain runs to 3179 residues: Guanylate cyclase beta (3179 aa).

At 1 to 60 (MKTQTLSLMNINGKRKFLGTNNKIYRKVIINPTSEDDIQKFCRNYFRIYNFSLYNFIRRL) the chain is on the cytoplasmic side. A helical transmembrane segment spans residues 61–81 (ISFDAILVYSLFLTVYIFSEI). The Extracellular portion of the chain corresponds to 82–88 (NHGETKK). The helical transmembrane segment at 89–109 (YLFIDTAISLFFNIILLIVIE) threads the bilayer. Residues 110–295 (SLFELKKLKD…FCIKMNNIVY (186 aa)) are Cytoplasmic-facing. A helical membrane pass occupies residues 296–316 (YLIFMYFVFVVLSIVIKTIFF). Residues 317–328 (HKKNSFQNSRDS) are Extracellular-facing. Residues 329–349 (FLSMLEDFVGLYILVLPIMMY) form a helical membrane-spanning segment. The Cytoplasmic segment spans residues 350-988 (SEKSLIYIIQ…GRLNRFSLCK (639 aa)). Residues 989–1009 (VFLWIIYLKITVVSFYFFHNF) form a helical membrane-spanning segment. The Extracellular segment spans residues 1010 to 1020 (DNYFSGSSASS). Residues 1021 to 1041 (ILYTQTTFALLHYFLIIAFSA) form a helical membrane-spanning segment. The Cytoplasmic segment spans residues 1042-1069 (YEIDLPYKFVRRLPYIYQLSRRKYFLNN). The helical transmembrane segment at 1070 to 1090 (NIILLTIIEAILISLTSYYIL) threads the bilayer. Over 1091–1102 (RLNVFHLITHRE) the chain is Extracellular. The helical transmembrane segment at 1103–1123 (FTFHIFILNVFITTEKILLLS) threads the bilayer. At 1124-1127 (KTWH) the chain is on the cytoplasmic side. Residues 1128 to 1148 (IYFFIMAVLIIGILLIYVNIF) traverse the membrane as a helical segment. Over 1149-1168 (TLVDCIKNGKCEFSLFQMEN) the chain is Extracellular. Residues 1169 to 1189 (IYFWTSLFPILYINFIFDKLM) form a helical membrane-spanning segment. The Cytoplasmic segment spans residues 1190-1304 (KYIKNRIYPD…YEKGNKLKLR (115 aa)). Residues 1305–1325 (IIVILLFLIYIIIFSSQTIID) form a helical membrane-spanning segment. The Extracellular portion of the chain corresponds to 1326-1331 (INTKSN). Residues 1332 to 1352 (IHYITMFYIIYFVLACVLLIY) traverse the membrane as a helical segment. The Cytoplasmic portion of the chain corresponds to 1353–1360 (IRIRNKAT). The helical transmembrane segment at 1361–1381 (STFFFFLSRFLLICGFCIELY) threads the bilayer. At 1382 to 1401 (DNISNDILNVLITYSFTVSY) the chain is on the extracellular side. Asn1383 carries N-linked (GlcNAc...) asparagine glycosylation. The chain crosses the membrane as a helical span at residues 1402–1422 (IFFMSFKILEALLVCISILLL). At 1423–1464 (TFGVYYEKNKNMIDICTHFCSNPYLSINNLDHMNISCLCKKQ) the chain is on the cytoplasmic side. A helical transmembrane segment spans residues 1465–1485 (IVIFLISLLSFTLICLSMKYY). Topologically, residues 1486-1507 (EIFYLKKKFLFRYKQKVNLAKQ) are extracellular. The chain crosses the membrane as a helical span at residues 1508-1528 (IEILHTMLPNFLVEYLLISDP). Residues 1529-2739 (KNDGIMVGKN…IINIDLTKKL (1211 aa)) lie on the Cytoplasmic side of the membrane. A Guanylate cyclase 1 domain is found at 1548–1700 (SVIFCDIDDF…DTVNTASRMK (153 aa)). 3 disordered regions span residues 2123–2153 (LHNY…YTSS), 2355–2379 (SINK…KDKK), and 2576–2656 (KDSD…HHHS). Residues 2131–2142 (NKNKNKKNNKNV) show a composition bias toward basic residues. The segment covering 2584–2607 (NNNKISKNRYNNNNNNNNSNYSNI) has biased composition (low complexity). Residues 2614 to 2645 (HNNKKNHHHNNNKYHHHNNNKYHHHNNNKYHH) show a composition bias toward basic residues. Residues 2740 to 2760 (IIIFIFTEIFLSLCNIIELSF) form a helical membrane-spanning segment. Over 2761–2770 (YEKKLRYNDS) the chain is Extracellular. Asn2768 carries an N-linked (GlcNAc...) asparagine glycan. A helical membrane pass occupies residues 2771–2791 (IVIIWLIRSIYLFIITYIWII). Topologically, residues 2792–2809 (LKTKLKEYKNNSSKMMWT) are cytoplasmic. The chain crosses the membrane as a helical span at residues 2810–2830 (IFILNIFLCSWGIILIDLSCI). Topologically, residues 2831 to 2842 (HYSMLLGNKNER) are extracellular. Residues 2843 to 2863 (ALFFMKDASELIICIQLIFIK) form a helical membrane-spanning segment. Residues 2864–2870 (NMLFKHK) lie on the Cytoplasmic side of the membrane. Residues 2871–2891 (FFFFVFFYIFLIYSFSKLFSI) traverse the membrane as a helical segment. Residues 2892–2895 (HTCQ) are Extracellular-facing. The helical transmembrane segment at 2896-2916 (THICCSIILFISINILYFWYS) threads the bilayer. At 2917–3179 (EYLDRIQFLV…KLRQKKGLRS (263 aa)) the chain is on the cytoplasmic side. Residues 2968 to 3102 (AFLFADIVGF…LDVLIANKIE (135 aa)) form the Guanylate cyclase 2 domain. Residues Asp2973, Ile2974, and Asp3017 each coordinate Mg(2+).

It in the N-terminal section; belongs to the cation transport ATPase (P-type) (TC 3.A.3) family. Type IV subfamily. This sequence in the C-terminal section; belongs to the adenylyl cyclase class-4/guanylyl cyclase family. Mg(2+) is required as a cofactor. It depends on Mn(2+) as a cofactor.

It localises to the membrane. It carries out the reaction GTP = 3',5'-cyclic GMP + diphosphate. With respect to regulation, basal guanylate activity of the recombinant guanylate cyclase domains 1 and 2 is not modulated by an increase in Ca(2+) levels or by the gametogenesis inducer xanthurenic acid. Functionally, catalyzes the synthesis of the second messenger cGMP from GTP. Regulates cGMP production in gametocytes; however, is dispensable for the initiation of gametogenesis. Does not have adenylate cyclase activity. The sequence is that of Guanylate cyclase beta from Plasmodium falciparum (isolate 3D7).